A 475-amino-acid chain; its full sequence is Phosphoethanolamine N-methyltransferase 1 (475 aa).

Belongs to the class I-like SAM-binding methyltransferase superfamily.

It catalyses the reaction phosphoethanolamine + S-adenosyl-L-methionine = N-methylethanolamine phosphate + S-adenosyl-L-homocysteine + H(+). Its pathway is phospholipid metabolism; phosphatidylcholine biosynthesis; phosphocholine from phosphoethanolamine. With respect to regulation, feedback inhibition by phosphatidylcholine. Catalyzes the first step in the synthesis of phosphocholine by converting phosphoethanolamine into phospho-monomethylethanolamine (N-methylethanolamine phosphate). Phosphocholine is a precursor for phosphatidylcholine, a major component in membranes and a precursor itself in the production of glycoconjugates secreted by parasitic nematodes to avoid host immune responses. This is Phosphoethanolamine N-methyltransferase 1 from Caenorhabditis elegans.